Here is a 610-residue protein sequence, read N- to C-terminus: Menin (610 aa).

The interaction with FANCD2 stretch occupies residues 214–390; that stretch reads GVAERSWLYL…SLLEAGEERP (177 aa). The tract at residues 460–552 is disordered; sequence REAEAAEAEE…SPPPEGPVLT (93 aa). Basic and acidic residues predominate over residues 484-500; the sequence is RRESKPEEPPPPKKPAL. Phosphoserine occurs at positions 487 and 543. Phosphothreonine is present on threonine 594.

Component of the MLL-HCF complex, at least composed of KMT2A/MLL1, MEN1, ASH2L, RBBP5, DPY30, WDR5, HCFC1 and HCFC2. Component of the menin-associated histone methyltransferase complex, at least composed of KMT2B/MLL4, MEN1, ASH2L, RBBP5, DPY30 and WDR5. Interacts with POLR2B. Interacts with POLR2A phosphorylated at 'Ser-5', but not with the unphosphorylated, nor 'Ser-2' phosphorylated POLR2A forms. Interacts with FANCD2 and DBF4. Interacts with JUND (via MBM motif); inhibits the interaction of JUND with MAPK10 and the phosphorylation of JUND by MAP kinases MAPK8 and MAPK10. Interacts with SMAD3, but not with SMAD2, nor SMAD4. Directly interacts with NFKB1, NFKB2 and RELA. Interacts with KMT2A (via MBM motif). The KMT2A-MEN1 complex interacts with PSIP1 with a greater affinity as MEN1 enhances interaction of KMT2A with PSIP1. Interacts with the fusion protein KMT2A-MLLT3. As to expression, ubiquitous.

The protein resides in the nucleus. Functionally, essential component of a MLL/SET1 histone methyltransferase (HMT) complex, a complex that specifically methylates 'Lys-4' of histone H3 (H3K4). Functions as a transcriptional regulator. Binds to the TERT promoter and represses telomerase expression. Plays a role in TGFB1-mediated inhibition of cell-proliferation, possibly regulating SMAD3 transcriptional activity. Represses JUND-mediated transcriptional activation on AP1 sites, as well as that mediated by NFKB subunit RELA. Positively regulates HOXC8 and HOXC6 gene expression. May be involved in normal hematopoiesis through the activation of HOXA9 expression. May be involved in DNA repair. This is Menin (MEN1) from Homo sapiens (Human).